The sequence spans 282 residues: Phosphatidylserine decarboxylase proenzyme (282 aa).

Catalysis depends on charge relay system; for autoendoproteolytic cleavage activity residues Asp-85, His-142, and Ser-244. The active-site Schiff-base intermediate with substrate; via pyruvic acid; for decarboxylase activity is the Ser-244. Position 244 is a pyruvic acid (Ser); by autocatalysis (Ser-244).

This sequence belongs to the phosphatidylserine decarboxylase family. PSD-B subfamily. Prokaryotic type I sub-subfamily. Heterodimer of a large membrane-associated beta subunit and a small pyruvoyl-containing alpha subunit. It depends on pyruvate as a cofactor. Post-translationally, is synthesized initially as an inactive proenzyme. Formation of the active enzyme involves a self-maturation process in which the active site pyruvoyl group is generated from an internal serine residue via an autocatalytic post-translational modification. Two non-identical subunits are generated from the proenzyme in this reaction, and the pyruvate is formed at the N-terminus of the alpha chain, which is derived from the carboxyl end of the proenzyme. The autoendoproteolytic cleavage occurs by a canonical serine protease mechanism, in which the side chain hydroxyl group of the serine supplies its oxygen atom to form the C-terminus of the beta chain, while the remainder of the serine residue undergoes an oxidative deamination to produce ammonia and the pyruvoyl prosthetic group on the alpha chain. During this reaction, the Ser that is part of the protease active site of the proenzyme becomes the pyruvoyl prosthetic group, which constitutes an essential element of the active site of the mature decarboxylase.

Its subcellular location is the cell membrane. The enzyme catalyses a 1,2-diacyl-sn-glycero-3-phospho-L-serine + H(+) = a 1,2-diacyl-sn-glycero-3-phosphoethanolamine + CO2. The protein operates within phospholipid metabolism; phosphatidylethanolamine biosynthesis; phosphatidylethanolamine from CDP-diacylglycerol: step 2/2. Its function is as follows. Catalyzes the formation of phosphatidylethanolamine (PtdEtn) from phosphatidylserine (PtdSer). The polypeptide is Phosphatidylserine decarboxylase proenzyme (Coxiella burnetii (strain CbuG_Q212) (Coxiella burnetii (strain Q212))).